Reading from the N-terminus, the 177-residue chain is uncharacterized protein (177 aa).

Residues 100 to 115 (QVQPHQQTHQQSQQTH) show a composition bias toward low complexity. Residues 100–135 (QVQPHQQTHQQSQQTHNKTVANSGDPPPPPPSQPNK) form a disordered region. The helical transmembrane segment at 141-158 (WIVGMVIGVVVLYLLYRY) threads the bilayer.

Its subcellular location is the membrane. This is an uncharacterized protein from Aedes vexans (Inland floodwater mosquito).